Here is a 100-residue protein sequence, read N- to C-terminus: Large ribosomal subunit protein uL23 (100 aa).

Belongs to the universal ribosomal protein uL23 family. As to quaternary structure, part of the 50S ribosomal subunit. Contacts protein L29, and trigger factor when it is bound to the ribosome.

Its function is as follows. One of the early assembly proteins it binds 23S rRNA. One of the proteins that surrounds the polypeptide exit tunnel on the outside of the ribosome. Forms the main docking site for trigger factor binding to the ribosome. The chain is Large ribosomal subunit protein uL23 from Idiomarina loihiensis (strain ATCC BAA-735 / DSM 15497 / L2-TR).